Consider the following 283-residue polypeptide: Ribosomal RNA small subunit methyltransferase A (283 aa).

S-adenosyl-L-methionine contacts are provided by asparagine 22, leucine 24, glycine 49, glutamate 70, and asparagine 113.

The protein belongs to the class I-like SAM-binding methyltransferase superfamily. rRNA adenine N(6)-methyltransferase family. RsmA subfamily.

The protein localises to the cytoplasm. It carries out the reaction adenosine(1518)/adenosine(1519) in 16S rRNA + 4 S-adenosyl-L-methionine = N(6)-dimethyladenosine(1518)/N(6)-dimethyladenosine(1519) in 16S rRNA + 4 S-adenosyl-L-homocysteine + 4 H(+). Its function is as follows. Specifically dimethylates two adjacent adenosines (A1518 and A1519) in the loop of a conserved hairpin near the 3'-end of 16S rRNA in the 30S particle. May play a critical role in biogenesis of 30S subunits. This is Ribosomal RNA small subunit methyltransferase A from Myxococcus xanthus (strain DK1622).